Here is a 180-residue protein sequence, read N- to C-terminus: Large ribosomal subunit protein uL15 (180 aa).

The disordered stretch occupies residues 1 to 62 (MKKERLEQAS…KTAGRGSKGQ (62 aa)).

Belongs to the universal ribosomal protein uL15 family. In terms of assembly, part of the 50S ribosomal subunit.

Functionally, binds to the 23S rRNA. The polypeptide is Large ribosomal subunit protein uL15 (Leptospira interrogans serogroup Icterohaemorrhagiae serovar copenhageni (strain Fiocruz L1-130)).